Consider the following 294-residue polypeptide: Formate dehydrogenase, nitrate-inducible, iron-sulfur subunit (294 aa).

At M1–A256 the chain is on the periplasmic side. 4 4Fe-4S ferredoxin-type domains span residues V30–E58, L91–N123, G124–E153, and Y158–K189. 16 residues coordinate [4Fe-4S] cluster: C39, C42, C45, C49, C100, C103, C108, C112, C133, C136, C139, C143, C160, C163, C175, and C179. The helical transmembrane segment at L257 to I279 threads the bilayer. Residues G280–E294 are Cytoplasmic-facing.

As to quaternary structure, trimer of heterotrimers, consisting of subunits alpha, beta and gamma. It depends on [4Fe-4S] cluster as a cofactor.

It localises to the cell inner membrane. Its function is as follows. Formate dehydrogenase allows E.coli to use formate as major electron donor during anaerobic respiration, when nitrate is used as electron acceptor. The beta subunit FdnH is an electron transfer unit containing 4 iron-sulfur clusters; it serves as a conduit for electrons that are transferred from the formate oxidation site in the alpha subunit (FdnG) to the menaquinone associated with the gamma subunit (FdnI) of formate dehydrogenase-N. Formate dehydrogenase-N is part of a system that generates proton motive force, together with the dissimilatory nitrate reductase (Nar). This chain is Formate dehydrogenase, nitrate-inducible, iron-sulfur subunit (fdnH), found in Escherichia coli (strain K12).